An 827-amino-acid polypeptide reads, in one-letter code: 6-phosphofructo-2-kinase 1 (827 aa).

Disordered stretches follow at residues 1–97 (MFKP…ENSA) and 149–175 (TRHHKRRPTTIDVPGLTKSKTSPDGLI). The span at 31–41 (SQDSSYDLLSR) shows a compositional bias: low complexity. Basic and acidic residues predominate over residues 42–59 (SSDDKIDAEKGPHDELSK). The span at 72–97 (TPISSNWNSPGITEENTPSDSPENSA) shows a compositional bias: polar residues. Ser-92 is modified (phosphoserine). Thr-157 carries the post-translational modification Phosphothreonine. ATP is bound at residue 190–197 (GLPATGKS). Catalysis depends on residues Asp-277 and Cys-309. Arg-343 contacts beta-D-fructose 6-phosphate. Ser-404 serves as the catalytic Phosphoserine intermediate. Glu-497 is a catalytic residue. The active-site Proton donor is the His-565. Residues Ser-644, Ser-652, Ser-659, and Ser-667 each carry the phosphoserine modification. Disordered stretches follow at residues 649–704 (APPS…SNFN) and 799–827 (HGKDYPNNADNNDNEDIRAKTMNRSQSHV). The span at 671–682 (SASSSQSELSEQ) shows a compositional bias: low complexity. Residues 683–704 (PKNSVSAQTGSNNTTLIGSNFN) show a composition bias toward polar residues.

It carries out the reaction beta-D-fructose 6-phosphate + ATP = beta-D-fructose 2,6-bisphosphate + ADP + H(+). With respect to regulation, phosphorylation results in the activation of the kinase activity. Synthesis of fructose 2,6-bisphosphate. This chain is 6-phosphofructo-2-kinase 1 (PFK26), found in Saccharomyces cerevisiae (strain ATCC 204508 / S288c) (Baker's yeast).